A 687-amino-acid polypeptide reads, in one-letter code: Putative secreted metallopeptidase (687 aa).

Residues 1–22 (MLFTSTAVAALSGALLIQPALA) form the signal peptide. Asparagine 54, asparagine 114, asparagine 252, asparagine 256, and asparagine 379 each carry an N-linked (GlcNAc...) asparagine glycan.

Belongs to the peptidase M10B family.

The protein resides in the secreted. The sequence is that of Putative secreted metallopeptidase from Arthroderma benhamiae (strain ATCC MYA-4681 / CBS 112371) (Trichophyton mentagrophytes).